The sequence spans 1485 residues: Glutamate receptor ionotropic, NMDA 2B (1485 aa).

Positions 1-26 (MKPRAECCSPKFWLVLAVLAVSGSRA) are cleaved as a signal peptide. Over 27 to 557 (RSQKSPPSIG…SAFLEPFSAD (531 aa)) the chain is Extracellular. N74 carries N-linked (GlcNAc...) asparagine glycosylation. C86 and C321 form a disulfide bridge. Zn(2+) contacts are provided by H127 and E284. 4 N-linked (GlcNAc...) asparagine glycosylation sites follow: N341, N348, N444, and N491. 2 cysteine pairs are disulfide-bonded: C429–C456 and C436–C457. L-glutamate is bound by residues T514 and R519. N542 carries an N-linked (GlcNAc...) asparagine glycan. The chain crosses the membrane as a helical span at residues 558–576 (VWVMMFVMLLIVSAVAVFV). Over 577 to 603 (FEYFSPVGYNRCLADGREPGGPSFTIG) the chain is Cytoplasmic. An intramembrane region (discontinuously helical) is located at residues 604–623 (KAIWLLWGLVFNNSVPVQNP). Positions 604–623 (KAIWLLWGLVFNNSVPVQNP) are pore-forming. Residues 624–630 (KGTTSKI) lie on the Cytoplasmic side of the membrane. Residues 631–646 (MVSVWAFFAVIFLASY) form a helical membrane-spanning segment. Residues 647–817 (TANLAAFMIQ…VMSSQLDIDN (171 aa)) are Extracellular-facing. N688 carries N-linked (GlcNAc...) asparagine glycosylation. L-glutamate-binding positions include 690–691 (ST) and D732. C746 and C801 form a disulfide bridge. Residues 818-837 (MAGVFYMLGAAMALSLITFI) traverse the membrane as a helical segment. Topologically, residues 838 to 1485 (CEHLFYWQFR…EKLSSIESDV (648 aa)) are cytoplasmic. Phosphoserine occurs at positions 882, 886, 917, and 920. 2 positions are modified to phosphotyrosine: Y962 and Y1039. S1058, S1061, and S1064 each carry phosphoserine. The segment at 1074–1097 (EGNAAKRRKQQYKDSLKKRPASAK) is disordered. Phosphotyrosine occurs at positions 1109 and 1133. Residue S1143 is modified to Phosphoserine. At Y1155 the chain carries Phosphotyrosine. A disordered region spans residues 1162–1194 (FKRDSVSGGGPCTNRSHLKHGAGDKHGVVSGVP). Phosphoserine occurs at positions 1255 and 1259. Residues 1269 to 1278 (PVAVPSNAPS) are compositionally biased toward low complexity. The interval 1269–1302 (PVAVPSNAPSTKYPQSPTNSKAQKKTRNKLRRQH) is disordered. Positions 1280 to 1289 (KYPQSPTNSK) are enriched in polar residues. Basic residues predominate over residues 1290 to 1301 (AQKKTRNKLRRQ). Residues 1292–1304 (KKTRNKLRRQHSY) are interaction with DAPK1. S1303 is modified (phosphoserine; by DAPK1). At Y1475 the chain carries Phosphotyrosine. The PDZ-binding signature appears at 1483–1485 (SDV).

The protein belongs to the glutamate-gated ion channel (TC 1.A.10.1) family. NR2B/GRIN2B subfamily. In terms of assembly, heterotetramer. Forms heterotetrameric channels composed of two GluN1/zeta subunits (GRIN1), and two identical GluN2/epsilon subunits (GRIN2A, GRIN2B, GRIN2C or GRIN2D) or GluN3 subunits (GRIN3A or GRIN3B) (in vitro). Can also form heterotetrameric channels that contain at least two GluN1 subunits and at least two different GluN2 subunits (or a combination of one GluN2 and one GluN3 subunits) (in vitro). In vivo, the subunit composition may depend on the expression levels of the different subunits. Found in a complex with GRIN1, GRIN3A and PPP2CB. Found in a complex with GRIN1 and GRIN3B. Interacts with MAGI3. Interacts with HIP1 and Neto1. Interacts with PDZ domains of PATJ, DLG3 and DLG4. Interacts with DAPK1. Found in a complex with GRIN1 and PRR7. Interacts with PRR7. Interacts with CAMK2A. Interacts with ARC; preventing ARC oligomerization. Interacts with TMEM25. Interacts (via the extreme C-terminus) with FRMPD2 (via the second PDZ domain); the interaction is direct and is likely to promote NMDAR-mediated neural signal transmission. Interacts with FAM81A; the interaction facilitates condensate formation via liquid-liquid phase separation. Post-translationally, phosphorylated on tyrosine residues. Phosphorylation at Ser-1303 by DAPK1 enhances synaptic NMDA receptor channel activity.

Its subcellular location is the cell membrane. It localises to the postsynaptic cell membrane. The protein localises to the cell projection. It is found in the dendrite. The protein resides in the late endosome. Its subcellular location is the lysosome. It localises to the cytoplasm. The protein localises to the cytoskeleton. The enzyme catalyses Ca(2+)(in) = Ca(2+)(out). It catalyses the reaction Na(+)(in) = Na(+)(out). The catalysed reaction is K(+)(in) = K(+)(out). Its function is as follows. Component of N-methyl-D-aspartate (NMDA) receptors (NMDARs) that function as heterotetrameric, ligand-gated cation channels with high calcium permeability and voltage-dependent block by Mg(2+). Participates in synaptic plasticity for learning and memory formation by contributing to the long-term depression (LTD) of hippocampus membrane currents. Channel activation requires binding of the neurotransmitter L-glutamate to the GluN2 subunit, glycine or D-serine binding to the GluN1 subunit, plus membrane depolarization to eliminate channel inhibition by Mg(2+). NMDARs mediate simultaneously the potasium efflux and the influx of calcium and sodium. Each GluN2 subunit confers differential attributes to channel properties, including activation, deactivation and desensitization kinetics, pH sensitivity, Ca2(+) permeability, and binding to allosteric modulators. In concert with DAPK1 at extrasynaptic sites, acts as a central mediator for stroke damage. Its phosphorylation at Ser-1303 by DAPK1 enhances synaptic NMDA receptor channel activity inducing injurious Ca2+ influx through them, resulting in an irreversible neuronal death. The sequence is that of Glutamate receptor ionotropic, NMDA 2B from Canis lupus familiaris (Dog).